The primary structure comprises 197 residues: ATP-dependent Clp protease proteolytic subunit 2 (197 aa).

Serine 101 serves as the catalytic Nucleophile. Histidine 126 is an active-site residue.

It belongs to the peptidase S14 family. In terms of assembly, fourteen ClpP subunits assemble into 2 heptameric rings which stack back to back to give a disk-like structure with a central cavity, resembling the structure of eukaryotic proteasomes.

The protein localises to the cytoplasm. The enzyme catalyses Hydrolysis of proteins to small peptides in the presence of ATP and magnesium. alpha-casein is the usual test substrate. In the absence of ATP, only oligopeptides shorter than five residues are hydrolyzed (such as succinyl-Leu-Tyr-|-NHMec, and Leu-Tyr-Leu-|-Tyr-Trp, in which cleavage of the -Tyr-|-Leu- and -Tyr-|-Trp bonds also occurs).. In terms of biological role, cleaves peptides in various proteins in a process that requires ATP hydrolysis. Has a chymotrypsin-like activity. Plays a major role in the degradation of misfolded proteins. The sequence is that of ATP-dependent Clp protease proteolytic subunit 2 from Trichormus variabilis (strain ATCC 29413 / PCC 7937) (Anabaena variabilis).